Reading from the N-terminus, the 378-residue chain is Phosphoserine aminotransferase (378 aa).

Arg53 lines the L-glutamate pocket. Trp117, Thr167, Asp190, and Gln213 together coordinate pyridoxal 5'-phosphate. The residue at position 214 (Lys214) is an N6-(pyridoxal phosphate)lysine. 255-256 contacts pyridoxal 5'-phosphate; the sequence is NT.

It belongs to the class-V pyridoxal-phosphate-dependent aminotransferase family. SerC subfamily. As to quaternary structure, homodimer. It depends on pyridoxal 5'-phosphate as a cofactor.

Its subcellular location is the cytoplasm. The catalysed reaction is O-phospho-L-serine + 2-oxoglutarate = 3-phosphooxypyruvate + L-glutamate. It catalyses the reaction 4-(phosphooxy)-L-threonine + 2-oxoglutarate = (R)-3-hydroxy-2-oxo-4-phosphooxybutanoate + L-glutamate. The protein operates within amino-acid biosynthesis; L-serine biosynthesis; L-serine from 3-phospho-D-glycerate: step 2/3. It functions in the pathway cofactor biosynthesis; pyridoxine 5'-phosphate biosynthesis; pyridoxine 5'-phosphate from D-erythrose 4-phosphate: step 3/5. In terms of biological role, catalyzes the reversible conversion of 3-phosphohydroxypyruvate to phosphoserine and of 3-hydroxy-2-oxo-4-phosphonooxybutanoate to phosphohydroxythreonine. This Ralstonia pickettii (strain 12J) protein is Phosphoserine aminotransferase.